Consider the following 60-residue polypeptide: Large ribosomal subunit protein bL32 (60 aa).

The segment covering 1 to 16 (MPNPKRRHSKKRTSTR) has biased composition (basic residues). Residues 1 to 28 (MPNPKRRHSKKRTSTRRAHDALKQPGLS) form a disordered region.

The protein belongs to the bacterial ribosomal protein bL32 family.

This chain is Large ribosomal subunit protein bL32, found in Solibacter usitatus (strain Ellin6076).